We begin with the raw amino-acid sequence, 211 residues long: Uracil phosphoribosyltransferase (211 aa).

Residues Arg-78, Arg-103, and 130–138 (DPMLATGGT) contribute to the 5-phospho-alpha-D-ribose 1-diphosphate site. Residues Ile-195 and 200-202 (GDA) contribute to the uracil site. Asp-201 lines the 5-phospho-alpha-D-ribose 1-diphosphate pocket.

Belongs to the UPRTase family. Requires Mg(2+) as cofactor.

It carries out the reaction UMP + diphosphate = 5-phospho-alpha-D-ribose 1-diphosphate + uracil. It participates in pyrimidine metabolism; UMP biosynthesis via salvage pathway; UMP from uracil: step 1/1. With respect to regulation, allosterically activated by GTP. In terms of biological role, catalyzes the conversion of uracil and 5-phospho-alpha-D-ribose 1-diphosphate (PRPP) to UMP and diphosphate. The sequence is that of Uracil phosphoribosyltransferase from Pseudarthrobacter chlorophenolicus (strain ATCC 700700 / DSM 12829 / CIP 107037 / JCM 12360 / KCTC 9906 / NCIMB 13794 / A6) (Arthrobacter chlorophenolicus).